A 204-amino-acid polypeptide reads, in one-letter code: uncharacterized protein (204 aa).

Residues 1–21 form the signal peptide; it reads MIKKFLLFAMLNIFLTNKAHS.

This is an uncharacterized protein from Borreliella burgdorferi (strain ATCC 35210 / DSM 4680 / CIP 102532 / B31) (Borrelia burgdorferi).